A 466-amino-acid chain; its full sequence is tRNA-2-methylthio-N(6)-dimethylallyladenosine synthase (466 aa).

One can recognise an MTTase N-terminal domain in the interval 22 to 139 (RRYYVWTVGC…VVALAPNPIY (118 aa)). Cys31, Cys67, Cys101, Cys166, Cys170, and Cys173 together coordinate [4Fe-4S] cluster. In terms of domain architecture, Radical SAM core spans 152–386 (SHPPVSVHVP…EQLQEQIATE (235 aa)). The 61-residue stretch at 389-449 (ARFLGQTVEV…PWSLQGVPQL (61 aa)) folds into the TRAM domain.

Belongs to the methylthiotransferase family. MiaB subfamily. In terms of assembly, monomer. The cofactor is [4Fe-4S] cluster.

The protein resides in the cytoplasm. The enzyme catalyses N(6)-dimethylallyladenosine(37) in tRNA + (sulfur carrier)-SH + AH2 + 2 S-adenosyl-L-methionine = 2-methylsulfanyl-N(6)-dimethylallyladenosine(37) in tRNA + (sulfur carrier)-H + 5'-deoxyadenosine + L-methionine + A + S-adenosyl-L-homocysteine + 2 H(+). In terms of biological role, catalyzes the methylthiolation of N6-(dimethylallyl)adenosine (i(6)A), leading to the formation of 2-methylthio-N6-(dimethylallyl)adenosine (ms(2)i(6)A) at position 37 in tRNAs that read codons beginning with uridine. This Chloroflexus aurantiacus (strain ATCC 29366 / DSM 635 / J-10-fl) protein is tRNA-2-methylthio-N(6)-dimethylallyladenosine synthase.